The sequence spans 347 residues: Heat-inducible transcription repressor HrcA (347 aa).

This sequence belongs to the HrcA family.

Its function is as follows. Negative regulator of class I heat shock genes (grpE-dnaK-dnaJ and groELS operons). Prevents heat-shock induction of these operons. This Rhodococcus erythropolis (strain PR4 / NBRC 100887) protein is Heat-inducible transcription repressor HrcA.